Reading from the N-terminus, the 250-residue chain is Cobalt transport protein CbiM (250 aa).

Positions 1 to 26 are cleaved as a signal peptide; that stretch reads MNKKEKRIVAIAAAFALCFGISPAVN. A run of 6 helical transmembrane segments spans residues 38-58, 68-88, 102-122, 134-154, 165-185, and 209-229; these read KYCITWGILSIPFLVAGYFSI, SITMLAMAGAFVFVLSSLKIP, LGAILFGPSAVSILGIIVLIF, TLGANTFSMAIAGPFVSFGIY, LSGIFLAAFVGDLFTYCVTSI, and FAPTQVPLAIIEGILTVVIMI.

This sequence belongs to the CbiM family. As to quaternary structure, forms an energy-coupling factor (ECF) transporter complex composed of an ATP-binding protein (A component, CbiO), a transmembrane protein (T component, CbiQ) and 2 possible substrate-capture proteins (S components, CbiM and CbiN) of unknown stoichimetry.

It is found in the cell membrane. It participates in cofactor biosynthesis; adenosylcobalamin biosynthesis. Part of the energy-coupling factor (ECF) transporter complex CbiMNOQ involved in cobalt import. This Lachnoclostridium phytofermentans (strain ATCC 700394 / DSM 18823 / ISDg) (Clostridium phytofermentans) protein is Cobalt transport protein CbiM.